Reading from the N-terminus, the 390-residue chain is UPF0229 protein ABC1477 (390 aa).

Disordered stretches follow at residues 1 to 31 and 81 to 118; these read MEKD…RHQE and VGQG…QAGE. Positions 7-16 are enriched in polar residues; sequence RQFTISQENW. Basic and acidic residues-rich tracts occupy residues 22–31 and 86–100; these read GFQDQRRHQE and GDSK…DPNG.

This sequence belongs to the UPF0229 family.

This chain is UPF0229 protein ABC1477, found in Shouchella clausii (strain KSM-K16) (Alkalihalobacillus clausii).